The chain runs to 419 residues: Adenylosuccinate synthetase (419 aa).

GTP is bound by residues Gly-11–Lys-17 and Gly-39–Thr-41. The Proton acceptor role is filled by Asp-12. Mg(2+)-binding residues include Asp-12 and Gly-39. Residues Asp-12–Lys-15, Asn-37–His-40, Thr-129, Arg-143, Asn-218, Thr-233, and Arg-297 each bind IMP. Catalysis depends on His-40, which acts as the Proton donor. Position 293–299 (Val-293–Arg-299) interacts with substrate. GTP contacts are provided by residues Arg-299, Lys-325–Asp-327, and Gly-407–Gly-409.

It belongs to the adenylosuccinate synthetase family. As to quaternary structure, homodimer. Requires Mg(2+) as cofactor.

Its subcellular location is the cytoplasm. It catalyses the reaction IMP + L-aspartate + GTP = N(6)-(1,2-dicarboxyethyl)-AMP + GDP + phosphate + 2 H(+). It participates in purine metabolism; AMP biosynthesis via de novo pathway; AMP from IMP: step 1/2. Functionally, plays an important role in the de novo pathway and in the salvage pathway of purine nucleotide biosynthesis. Catalyzes the first committed step in the biosynthesis of AMP from IMP. This Coccidioides posadasii (strain C735) (Valley fever fungus) protein is Adenylosuccinate synthetase.